A 746-amino-acid chain; its full sequence is H(+)/Cl(-) exchange transporter 5 (746 aa).

The Cytoplasmic portion of the chain corresponds to 1–54 (MDFLEEPIPGVGTYDDFNTIDWVREKSRDRDRHREITNRSKESTWALIHSVSDA). Transmembrane regions (helical) follow at residues 55–92 (FSGW…ICTE) and 138–161 (VNYF…VKVF). The Selectivity filter part_1 motif lies at 167 to 171 (GSGIP). Serine 168 contributes to the chloride binding site. Positions 170-177 (IPEIKTIL) form an intramembrane region, helical. 2 consecutive transmembrane segments (helical) span residues 186 to 205 (LGKW…VSSG) and 211 to 230 (EGPL…HCFN). The Selectivity filter part_2 signature appears at 209–213 (GKEGP). Intramembrane regions (helical) lie at residues 242-254 (VLSA…VSVA) and 258-266 (PIGGVLFSL). 5 consecutive transmembrane segments (helical) span residues 278-296 (LWRS…RSIN), 319-344 (LVPF…IAWC), 352-372 (LGKY…ILAF), 428-448 (MWQL…TFGM), and 453-472 (GLFI…LGVG). The Selectivity filter part_3 signature appears at 453 to 457 (GLFIP). Phenylalanine 455 serves as a coordination point for chloride. Residues 500-514 (GLYAMVGAAACLGGV) constitute an intramembrane region (helical). Residues 515–517 (TRM) constitute an intramembrane region (note=Loop between two helices). The helical intramembrane region spans 518 to 529 (TVSLVVIMFELT). Residues 530-534 (GGLEY) constitute an intramembrane region (note=Loop between two helices). A helical membrane pass occupies residues 535 to 552 (IVPLMAAAMTSKWVADAL). Residues 553–746 (GREGIYDAHI…NQDPDSILFN (194 aa)) lie on the Cytoplasmic side of the membrane. Tyrosine 558 lines the chloride pocket. CBS domains are found at residues 586-650 (MKPR…ARKE) and 682-742 (ILDL…DPDS). Residues threonine 596, 617-619 (YSG), and 724-727 (TKKD) contribute to the ATP site.

It belongs to the chloride channel (TC 2.A.49) family. ClC-5/CLCN5 subfamily. In terms of assembly, interacts with NEDD4 and NEDD4L. Post-translationally, ubiquitinated by NEDD4L in the presence of albumin; which promotes endocytosis and proteasomal degradation. Detected in duodenum, jejunum and ileum. Detected in crypt and villus regions of the epithelium of the small intestine.

The protein resides in the golgi apparatus membrane. It is found in the endosome membrane. It localises to the cell membrane. The catalysed reaction is 2 chloride(in) + H(+)(out) = 2 chloride(out) + H(+)(in). Proton-coupled chloride transporter. Functions as antiport system and exchanges chloride ions against protons. Important for normal acidification of the endosome lumen. May play an important role in renal tubular function. The CLC channel family contains both chloride channels and proton-coupled anion transporters that exchange chloride or another anion for protons. The absence of conserved gating glutamate residues is typical for family members that function as channels. This is H(+)/Cl(-) exchange transporter 5 (CLCN5) from Cavia porcellus (Guinea pig).